Here is an 86-residue protein sequence, read N- to C-terminus: Large ribosomal subunit protein bL31B (86 aa).

This sequence belongs to the bacterial ribosomal protein bL31 family. Type B subfamily. In terms of assembly, part of the 50S ribosomal subunit.

The sequence is that of Large ribosomal subunit protein bL31B from Streptococcus agalactiae serotype Ia (strain ATCC 27591 / A909 / CDC SS700).